Consider the following 413-residue polypeptide: Gamma-glutamyl phosphate reductase (413 aa).

The protein belongs to the gamma-glutamyl phosphate reductase family.

It localises to the cytoplasm. The catalysed reaction is L-glutamate 5-semialdehyde + phosphate + NADP(+) = L-glutamyl 5-phosphate + NADPH + H(+). It functions in the pathway amino-acid biosynthesis; L-proline biosynthesis; L-glutamate 5-semialdehyde from L-glutamate: step 2/2. In terms of biological role, catalyzes the NADPH-dependent reduction of L-glutamate 5-phosphate into L-glutamate 5-semialdehyde and phosphate. The product spontaneously undergoes cyclization to form 1-pyrroline-5-carboxylate. This chain is Gamma-glutamyl phosphate reductase, found in Rhodococcus jostii (strain RHA1).